Consider the following 365-residue polypeptide: MTENHYLLLTPGPLTTTKTVKEVMLYDWCTWDVEYNMMVQQVRAKLVSLATKEEERYITVLMQGSGTFSVEAVIGSVIPKNGKMLVCTNGAYGKRIVQMAEMLHIDVVVSQTEEWEPTNIVEVEKILQQDKEITHIAVVHCETTTGIINPIVDVCKLGKQYGKVTLVDAMSSFGGIEIDIAELQIDFLISSANKCIQGVPGFGFVIAKRDELLKCKGQARSLSLDLYDKWETMENQNGKWRFTSPTHVVHAFYQALLELEKEGGVKARYNRYDNNQKLLVNRMREIGFKPLVDEKYQSPIITSFIYPEEWFDFEQLYNELKRDGFVIYPGKISKVDTFRIGNIGDVHEADIHRLVDSIAKGVVIG.

K194 is subject to N6-(pyridoxal phosphate)lysine.

It belongs to the class-V pyridoxal-phosphate-dependent aminotransferase family. PhnW subfamily. As to quaternary structure, homodimer. Pyridoxal 5'-phosphate is required as a cofactor.

The catalysed reaction is (2-aminoethyl)phosphonate + pyruvate = phosphonoacetaldehyde + L-alanine. Its function is as follows. Involved in phosphonate degradation. The polypeptide is 2-aminoethylphosphonate--pyruvate transaminase (Bacillus cereus (strain AH187)).